Reading from the N-terminus, the 192-residue chain is Sarcoplasmic calcium-binding protein, alpha-B and -A chains (192 aa).

Ala1 bears the N-acetylalanine mark. 4 EF-hand domains span residues 4-39 (WDNR…NTLI), 56-91 (IMRN…HCQG), 100-135 (AFKV…RSAF), and 136-171 (AEVK…YAQF). Ca(2+)-binding residues include Asp17, Asp19, Asp21, Asp28, Asp69, Asn71, Asp73, Glu75, Glu80, Asp113, Asn115, Asp117, Lys119, and Glu124.

In terms of assembly, SCPs from crayfish, lobster, and shrimp are polymorphic dimers; three isotypes (alpha-alpha, alpha-beta, and beta-beta) have been identified.

Like parvalbumins, SCPs seem to be more abundant in fast contracting muscles, but no functional relationship can be established from this distribution. This chain is Sarcoplasmic calcium-binding protein, alpha-B and -A chains, found in Penaeus sp. (Penoeid shrimp).